We begin with the raw amino-acid sequence, 858 residues long: DNA mismatch repair protein MutS (858 aa).

Residue Gly613–Ser620 coordinates ATP.

It belongs to the DNA mismatch repair MutS family.

Functionally, this protein is involved in the repair of mismatches in DNA. It is possible that it carries out the mismatch recognition step. This protein has a weak ATPase activity. The chain is DNA mismatch repair protein MutS from Dehalococcoides mccartyi (strain ATCC BAA-2100 / JCM 16839 / KCTC 5957 / BAV1).